The chain runs to 687 residues: Sphingoid long chain base kinase 5 (687 aa).

Positions Met1–Gln20 are disordered. Residues Cys91 and Cys94 are each lipidated (S-palmitoyl cysteine; by AKR1). Residues Ile101 to Leu116 show a composition bias toward basic and acidic residues. Disordered stretches follow at residues Ile101–Gln130 and Asp180–Thr207. Residues Asn193–Thr207 show a composition bias toward low complexity. One can recognise a DAGKc domain in the interval Arg266–Ser405. Residues Asn276–Phe278 and Thr308 contribute to the ATP site. Residue Ser333 to Gly336 participates in substrate binding. Catalysis depends on Asp335, which acts as the Proton donor/acceptor. ATP is bound by residues Glu340, Gly366–Gly368, Arg434, and Arg440. The span at Glu506–Asp524 shows a compositional bias: acidic residues. Residues Glu506–Ser525 form a disordered region. Asp652–Glu654 contacts ATP.

Its subcellular location is the golgi apparatus membrane. The enzyme catalyses (4R)-hydroxysphinganine + ATP = (4R)-hydroxysphinganine 1-phosphate + ADP + H(+). It catalyses the reaction a sphingoid base + ATP = a sphingoid 1-phosphate + ADP + H(+). The catalysed reaction is sphinganine + ATP = sphinganine 1-phosphate + ADP + H(+). Its function is as follows. Catalyzes the phosphorylation of the sphingoid long chain bases dihydrosphingosine (DHS or sphinganine) and phytosphingosine (PHS) to form dihydrosphingosine 1-phosphate (DHS-1P) and phytosphingosine 1-phosphate (PHS-1P) respectively. Redundant to LCB4, is only responsible for few percent of the total activity. Involved in the biosynthesis of sphingolipids and ceramides. Involved in heat-induced transient cell cycle arrest. Accumulation of phosphorylated sphingoid long chain bases (LCBPs) stimulates calcium influx and activates calcineurin signaling. Involved in heat-stress resistance. The sequence is that of Sphingoid long chain base kinase 5 (LCB5) from Saccharomyces cerevisiae (strain ATCC 204508 / S288c) (Baker's yeast).